Reading from the N-terminus, the 362-residue chain is MAQIFNFSSGPAMLPAEVLKQAQQELRDWNGLGTSVMEVSHRGKEFIQVAEEAEKDFRDLLNVPSNYKVLFCHGGGRGQFAAVPLNILGDKTTADYVDAGYWAASAIKEAKKYCTPNVFDAKVTVDGFRAVKPMSEWQLSDNAAYMHYCPNETIDGIAIDETPNFGKDVVVAADFSSTILSRPIDVSRYGVIYAGAQKNIGPAGLTIVIVREDLLGKANIACPSILDYSILNDNDSMFNTPPTFAWYLSGLVFKWLKANGGVVAMDKINQQKAELLYGVIDNSDFYRNDVAKANRSRMNVPFQLADSALDKLFLEESFAAGLHALKGHRVVGGMRASIYNAMPLEGVKALTDFMVEFERRHG.

2 residues coordinate L-glutamate: Ser-9 and Arg-42. Pyridoxal 5'-phosphate-binding positions include 76-77, Trp-102, Thr-153, Asp-174, and Gln-197; that span reads GR. At Lys-198 the chain carries N6-(pyridoxal phosphate)lysine. 239–240 lines the pyridoxal 5'-phosphate pocket; sequence NT.

This sequence belongs to the class-V pyridoxal-phosphate-dependent aminotransferase family. SerC subfamily. In terms of assembly, homodimer. The cofactor is pyridoxal 5'-phosphate.

It is found in the cytoplasm. The catalysed reaction is O-phospho-L-serine + 2-oxoglutarate = 3-phosphooxypyruvate + L-glutamate. It carries out the reaction 4-(phosphooxy)-L-threonine + 2-oxoglutarate = (R)-3-hydroxy-2-oxo-4-phosphooxybutanoate + L-glutamate. Its pathway is amino-acid biosynthesis; L-serine biosynthesis; L-serine from 3-phospho-D-glycerate: step 2/3. The protein operates within cofactor biosynthesis; pyridoxine 5'-phosphate biosynthesis; pyridoxine 5'-phosphate from D-erythrose 4-phosphate: step 3/5. Its function is as follows. Catalyzes the reversible conversion of 3-phosphohydroxypyruvate to phosphoserine and of 3-hydroxy-2-oxo-4-phosphonooxybutanoate to phosphohydroxythreonine. The protein is Phosphoserine aminotransferase of Escherichia coli O127:H6 (strain E2348/69 / EPEC).